The chain runs to 144 residues: Flagellar assembly factor FliW (144 aa).

This sequence belongs to the FliW family. As to quaternary structure, interacts with translational regulator CsrA and flagellin(s).

It is found in the cytoplasm. Functionally, acts as an anti-CsrA protein, binds CsrA and prevents it from repressing translation of its target genes, one of which is flagellin. Binds to flagellin and participates in the assembly of the flagellum. This Geobacillus kaustophilus (strain HTA426) protein is Flagellar assembly factor FliW.